The sequence spans 184 residues: ATP synthase subunit b (184 aa).

A helical membrane pass occupies residues 15–34; the sequence is VQPGLIFWTLVTFVIAAVVL.

This sequence belongs to the ATPase B chain family. In terms of assembly, F-type ATPases have 2 components, F(1) - the catalytic core - and F(0) - the membrane proton channel. F(1) has five subunits: alpha(3), beta(3), gamma(1), delta(1), epsilon(1). F(0) has three main subunits: a(1), b(2) and c(10-14). The alpha and beta chains form an alternating ring which encloses part of the gamma chain. F(1) is attached to F(0) by a central stalk formed by the gamma and epsilon chains, while a peripheral stalk is formed by the delta and b chains.

Its subcellular location is the cell inner membrane. In terms of biological role, f(1)F(0) ATP synthase produces ATP from ADP in the presence of a proton or sodium gradient. F-type ATPases consist of two structural domains, F(1) containing the extramembraneous catalytic core and F(0) containing the membrane proton channel, linked together by a central stalk and a peripheral stalk. During catalysis, ATP synthesis in the catalytic domain of F(1) is coupled via a rotary mechanism of the central stalk subunits to proton translocation. Its function is as follows. Component of the F(0) channel, it forms part of the peripheral stalk, linking F(1) to F(0). The chain is ATP synthase subunit b from Myxococcus xanthus (strain DK1622).